Here is a 188-residue protein sequence, read N- to C-terminus: Protease-associated domain-containing protein 1 (188 aa).

The N-terminal stretch at 1 to 21 (MVPGAAGWCCLVLWLPACVAA) is a signal peptide. Positions 83-163 (IQDQIALVER…RSLEQHGLPW (81 aa)) constitute a PA domain. The N-linked (GlcNAc...) asparagine glycan is linked to Asn-171.

N-glycosylated; required for efficient secretion. In terms of tissue distribution, highly expressed in skeletal muscle, heart and liver. Expressed at intermediate level in kidney.

It is found in the secreted. In terms of biological role, plays a role in the modulation of physical activity and adiposity. The sequence is that of Protease-associated domain-containing protein 1 from Homo sapiens (Human).